The primary structure comprises 381 residues: UDP-N-acetylglucosamine--N-acetylmuramyl-(pentapeptide) pyrophosphoryl-undecaprenol N-acetylglucosamine transferase (381 aa).

UDP-N-acetyl-alpha-D-glucosamine contacts are provided by residues 10–12 (TGG), Asn124, Arg165, Ser207, Ile263, and Gln308.

This sequence belongs to the glycosyltransferase 28 family. MurG subfamily.

The protein resides in the cell inner membrane. The catalysed reaction is di-trans,octa-cis-undecaprenyl diphospho-N-acetyl-alpha-D-muramoyl-L-alanyl-D-glutamyl-meso-2,6-diaminopimeloyl-D-alanyl-D-alanine + UDP-N-acetyl-alpha-D-glucosamine = di-trans,octa-cis-undecaprenyl diphospho-[N-acetyl-alpha-D-glucosaminyl-(1-&gt;4)]-N-acetyl-alpha-D-muramoyl-L-alanyl-D-glutamyl-meso-2,6-diaminopimeloyl-D-alanyl-D-alanine + UDP + H(+). Its pathway is cell wall biogenesis; peptidoglycan biosynthesis. In terms of biological role, cell wall formation. Catalyzes the transfer of a GlcNAc subunit on undecaprenyl-pyrophosphoryl-MurNAc-pentapeptide (lipid intermediate I) to form undecaprenyl-pyrophosphoryl-MurNAc-(pentapeptide)GlcNAc (lipid intermediate II). This Trichlorobacter lovleyi (strain ATCC BAA-1151 / DSM 17278 / SZ) (Geobacter lovleyi) protein is UDP-N-acetylglucosamine--N-acetylmuramyl-(pentapeptide) pyrophosphoryl-undecaprenol N-acetylglucosamine transferase.